Here is a 253-residue protein sequence, read N- to C-terminus: Ubiquinone/menaquinone biosynthesis C-methyltransferase UbiE (253 aa).

Residues Thr76, Asp97, and 125–126 (NA) each bind S-adenosyl-L-methionine.

This sequence belongs to the class I-like SAM-binding methyltransferase superfamily. MenG/UbiE family.

The catalysed reaction is a 2-demethylmenaquinol + S-adenosyl-L-methionine = a menaquinol + S-adenosyl-L-homocysteine + H(+). It catalyses the reaction a 2-methoxy-6-(all-trans-polyprenyl)benzene-1,4-diol + S-adenosyl-L-methionine = a 5-methoxy-2-methyl-3-(all-trans-polyprenyl)benzene-1,4-diol + S-adenosyl-L-homocysteine + H(+). It participates in quinol/quinone metabolism; menaquinone biosynthesis; menaquinol from 1,4-dihydroxy-2-naphthoate: step 2/2. It functions in the pathway cofactor biosynthesis; ubiquinone biosynthesis. Its function is as follows. Methyltransferase required for the conversion of demethylmenaquinol (DMKH2) to menaquinol (MKH2) and the conversion of 2-polyprenyl-6-methoxy-1,4-benzoquinol (DDMQH2) to 2-polyprenyl-3-methyl-6-methoxy-1,4-benzoquinol (DMQH2). The sequence is that of Ubiquinone/menaquinone biosynthesis C-methyltransferase UbiE from Rhodopseudomonas palustris (strain ATCC BAA-98 / CGA009).